We begin with the raw amino-acid sequence, 354 residues long: UDP-3-O-acylglucosamine N-acyltransferase (354 aa).

The Proton acceptor role is filled by H245.

The protein belongs to the transferase hexapeptide repeat family. LpxD subfamily. Homotrimer.

It carries out the reaction a UDP-3-O-[(3R)-3-hydroxyacyl]-alpha-D-glucosamine + a (3R)-hydroxyacyl-[ACP] = a UDP-2-N,3-O-bis[(3R)-3-hydroxyacyl]-alpha-D-glucosamine + holo-[ACP] + H(+). Its pathway is bacterial outer membrane biogenesis; LPS lipid A biosynthesis. In terms of biological role, catalyzes the N-acylation of UDP-3-O-acylglucosamine using 3-hydroxyacyl-ACP as the acyl donor. Is involved in the biosynthesis of lipid A, a phosphorylated glycolipid that anchors the lipopolysaccharide to the outer membrane of the cell. The chain is UDP-3-O-acylglucosamine N-acyltransferase from Anaeromyxobacter dehalogenans (strain 2CP-C).